Here is a 701-residue protein sequence, read N- to C-terminus: Heterodisulfide reductase subunit A-like protein (701 aa).

152 to 175 (GGGIAGIFAALDIANAGYKVYLVE) contacts FAD. The region spanning 239–268 (KQTWVDWDLCTGCGACTDVCPPKARVPDEF) is the 4Fe-4S ferredoxin-type 1 domain. 12 residues coordinate [4Fe-4S] cluster: cysteine 248, cysteine 251, cysteine 254, cysteine 326, cysteine 627, cysteine 630, cysteine 633, cysteine 637, cysteine 660, cysteine 663, cysteine 666, and cysteine 670. 2 consecutive 4Fe-4S ferredoxin-type domains span residues 618 to 647 (LVSEVDKEKCSGCGICVPLCPYGAITMTKY) and 651 to 680 (MRAEINPALCKGCGVCAAACPSKAIKLHGF).

This sequence belongs to the HdrA family. In terms of assembly, the heterodisulfide reductase is composed of three subunits; HdlA, HdlB and HdlC. It forms a complex with the F420-non-reducing hydrogenase (Mvh), which provides the reducing equivalents to the heterodisulfide reductase. [4Fe-4S] cluster is required as a cofactor. The cofactor is FAD.

Its subcellular location is the cytoplasm. Has oxidoreductase activity. The Hdl and Mvh subunits may together mediate electron transfer from hydrogen to an unidentified electron acceptor on the cytoplasmic side of the membrane. The protein is Heterodisulfide reductase subunit A-like protein (hdlA) of Archaeoglobus profundus (strain DSM 5631 / JCM 9629 / NBRC 100127 / Av18).